We begin with the raw amino-acid sequence, 329 residues long: Ketol-acid reductoisomerase (NADP(+)) (329 aa).

A KARI N-terminal Rossmann domain is found at 2 to 182 (TQLFYDTDAD…GGTRAGILET (181 aa)). Residues 25 to 28 (YGSQ), S51, S53, and 83 to 86 (DEFQ) contribute to the NADP(+) site. H108 is an active-site residue. Position 134 (G134) interacts with NADP(+). A KARI C-terminal knotted domain is found at 183-328 (NFKEETETDL…KGLRAMFSWL (146 aa)). The Mg(2+) site is built by D191, E195, E227, and E231. A substrate-binding site is contributed by S252.

This sequence belongs to the ketol-acid reductoisomerase family. Requires Mg(2+) as cofactor.

It catalyses the reaction (2R)-2,3-dihydroxy-3-methylbutanoate + NADP(+) = (2S)-2-acetolactate + NADPH + H(+). The catalysed reaction is (2R,3R)-2,3-dihydroxy-3-methylpentanoate + NADP(+) = (S)-2-ethyl-2-hydroxy-3-oxobutanoate + NADPH + H(+). It functions in the pathway amino-acid biosynthesis; L-isoleucine biosynthesis; L-isoleucine from 2-oxobutanoate: step 2/4. It participates in amino-acid biosynthesis; L-valine biosynthesis; L-valine from pyruvate: step 2/4. In terms of biological role, involved in the biosynthesis of branched-chain amino acids (BCAA). Catalyzes an alkyl-migration followed by a ketol-acid reduction of (S)-2-acetolactate (S2AL) to yield (R)-2,3-dihydroxy-isovalerate. In the isomerase reaction, S2AL is rearranged via a Mg-dependent methyl migration to produce 3-hydroxy-3-methyl-2-ketobutyrate (HMKB). In the reductase reaction, this 2-ketoacid undergoes a metal-dependent reduction by NADPH to yield (R)-2,3-dihydroxy-isovalerate. In Prochlorococcus marinus (strain MIT 9515), this protein is Ketol-acid reductoisomerase (NADP(+)).